A 152-amino-acid chain; its full sequence is Urease accessory protein UreE (152 aa).

Belongs to the UreE family.

It localises to the cytoplasm. In terms of biological role, involved in urease metallocenter assembly. Binds nickel. Probably functions as a nickel donor during metallocenter assembly. The polypeptide is Urease accessory protein UreE (Enterobacter sp. (strain 638)).